The primary structure comprises 86 residues: MTKFNLEQALQGAPVRLNNGFKAYIFADVSLLAINEPYPLIGGYAYSISSFYDNQEHQRFEECRWAKDGKCDRLSALGSIAGMWED.

This is an uncharacterized protein from Haemophilus phage HP1 (strain HP1c1) (Bacteriophage HP1).